Reading from the N-terminus, the 376-residue chain is Transcriptional regulator STP4 (376 aa).

3 disordered regions span residues 25–58 (QNYC…PHAS), 89–122 (SSNS…SNSS), and 137–210 (VNCI…NWKP). 2 stretches are compositionally biased toward low complexity: residues 32 to 50 (SPSP…TSPP) and 89 to 103 (SSNS…YSPT). Polar residues-rich tracts occupy residues 146–183 (PRST…LSVK) and 191–200 (EPQNSNTIIS). Residues 241-263 (HICKYCERGFARPNDLFRHVKCH) form a C2H2-type zinc finger.

The protein resides in the nucleus. In terms of biological role, probable transcription factor involved in response to cell wall damage. The protein is Transcriptional regulator STP4 (STP4) of Candida albicans (strain SC5314 / ATCC MYA-2876) (Yeast).